The primary structure comprises 332 residues: 3'(2'),5'-bisphosphate nucleotidase (332 aa).

The active-site Proton acceptor is aspartate 49. Glutamate 73, aspartate 129, isoleucine 131, and aspartate 132 together coordinate Mg(2+). The active-site Proton acceptor is threonine 134. 5 residues coordinate adenosine 3',5'-bisphosphate: threonine 134, serine 245, lysine 248, arginine 262, and aspartate 274. AMP contacts are provided by serine 245, lysine 248, arginine 262, and aspartate 274. Residue aspartate 274 coordinates Mg(2+).

Belongs to the inositol monophosphatase superfamily. Requires Mg(2+) as cofactor.

It carries out the reaction 3'-phosphoadenylyl sulfate + H2O = adenosine 5'-phosphosulfate + phosphate. The enzyme catalyses adenosine 3',5'-bisphosphate + H2O = AMP + phosphate. The catalysed reaction is adenosine 2',5'-bisphosphate + H2O = AMP + phosphate. It catalyses the reaction 1D-myo-inositol 1,4-bisphosphate + H2O = 1D-myo-inositol 4-phosphate + phosphate. It carries out the reaction 1D-myo-inositol 1,3,4-trisphosphate + H2O = 1D-myo-inositol 3,4-bisphosphate + phosphate. In terms of biological role, phosphatase that converts adenosine 3'-phosphate 5'-phosphosulfate (PAPS) to adenosine 5'-phosphosulfate (APS) and 3'(2')-phosphoadenosine 5'-phosphate (PAP) to AMP. Is also able to hydrolyze inositol 1,4-bisphosphate and inositol 1,3,4-trisphosphate. The sequence is that of 3'(2'),5'-bisphosphate nucleotidase from Dictyostelium discoideum (Social amoeba).